The sequence spans 149 residues: Large ribosomal subunit protein bL9 (149 aa).

This sequence belongs to the bacterial ribosomal protein bL9 family.

In terms of biological role, binds to the 23S rRNA. The sequence is that of Large ribosomal subunit protein bL9 from Laribacter hongkongensis (strain HLHK9).